We begin with the raw amino-acid sequence, 643 residues long: 1-deoxy-D-xylulose-5-phosphate synthase (643 aa).

Thiamine diphosphate contacts are provided by residues H78 and 119 to 121 (AHS). D150 serves as a coordination point for Mg(2+). Thiamine diphosphate is bound by residues 151-152 (GS), N179, Y288, and E370. N179 serves as a coordination point for Mg(2+).

This sequence belongs to the transketolase family. DXPS subfamily. In terms of assembly, homodimer. Mg(2+) is required as a cofactor. Requires thiamine diphosphate as cofactor.

The enzyme catalyses D-glyceraldehyde 3-phosphate + pyruvate + H(+) = 1-deoxy-D-xylulose 5-phosphate + CO2. It functions in the pathway metabolic intermediate biosynthesis; 1-deoxy-D-xylulose 5-phosphate biosynthesis; 1-deoxy-D-xylulose 5-phosphate from D-glyceraldehyde 3-phosphate and pyruvate: step 1/1. Functionally, catalyzes the acyloin condensation reaction between C atoms 2 and 3 of pyruvate and glyceraldehyde 3-phosphate to yield 1-deoxy-D-xylulose-5-phosphate (DXP). The polypeptide is 1-deoxy-D-xylulose-5-phosphate synthase (Brucella abortus (strain S19)).